Consider the following 280-residue polypeptide: Dexamethasone-induced Ras-related protein 1 (280 aa).

The residue at position 11 (cysteine 11) is an S-nitrosocysteine. 31–38 provides a ligand contact to GTP; that stretch reads GSSKVGKT. Residues 53–61 carry the Effector region motif; that stretch reads YTPTIEDFH. Residues 78–82 and 145–148 each bind GTP; these read DTSGN and NKGD. Cysteine methyl ester is present on cysteine 277. Cysteine 277 carries the S-farnesyl cysteine lipid modification. Residues 278–280 constitute a propeptide, removed in mature form; the sequence is VIS.

It belongs to the small GTPase superfamily. RasD family. In terms of assembly, component of a complex, at least composed of APBB1, RASD1/DEXRAS1 and APP. Interacts with APBB1/FE65. Forms a ternary complex with CAPON and NOS1. In terms of processing, S-nitrosylation stimulates guanine-nucleotide exchange activity. As to expression, expressed in brain, heart, kidney and liver.

It is found in the cell membrane. The protein resides in the cytoplasm. The protein localises to the perinuclear region. Its subcellular location is the nucleus. Small GTPase. Negatively regulates the transcription regulation activity of the APBB1/FE65-APP complex via its interaction with APBB1/FE65. The sequence is that of Dexamethasone-induced Ras-related protein 1 (Rasd1) from Mus musculus (Mouse).